We begin with the raw amino-acid sequence, 79 residues long: Small ribosomal subunit protein uS17 (79 aa).

This sequence belongs to the universal ribosomal protein uS17 family. Part of the 30S ribosomal subunit.

One of the primary rRNA binding proteins, it binds specifically to the 5'-end of 16S ribosomal RNA. This is Small ribosomal subunit protein uS17 from Roseobacter denitrificans (strain ATCC 33942 / OCh 114) (Erythrobacter sp. (strain OCh 114)).